A 1394-amino-acid chain; its full sequence is DNA-directed RNA polymerase subunit beta'' (1394 aa).

Cysteine 224, cysteine 295, cysteine 302, and cysteine 305 together coordinate Zn(2+).

It belongs to the RNA polymerase beta' chain family. RpoC2 subfamily. In terms of assembly, in plastids the minimal PEP RNA polymerase catalytic core is composed of four subunits: alpha, beta, beta', and beta''. When a (nuclear-encoded) sigma factor is associated with the core the holoenzyme is formed, which can initiate transcription. It depends on Zn(2+) as a cofactor.

Its subcellular location is the plastid. It is found in the chloroplast. It carries out the reaction RNA(n) + a ribonucleoside 5'-triphosphate = RNA(n+1) + diphosphate. Functionally, DNA-dependent RNA polymerase catalyzes the transcription of DNA into RNA using the four ribonucleoside triphosphates as substrates. The protein is DNA-directed RNA polymerase subunit beta'' of Vitis vinifera (Grape).